Reading from the N-terminus, the 505-residue chain is MITLTGHTLTIEEMKRLLLEGEGVTACPTSMQKVAECREVVEKIVEDGKVVYGITTGFGKFSDVLIQKDDVKALQHNLIQSHACGIGEPFPEEVSRGMLILRANTMLKGVSGVRPLVVNMLLEFVNRKIHPVVPQQGSLGASGDLAPLSHLALVLLGEGEVFYKGKRVHAMVALTEEGLEPIELEAKEGLALINGTQAMTAQGVLSYIEAEATAYQAELIASMTIEGLQGIIDAFDENVHKARGYKEQVEVASRIRDILHDSKLTTKQGELRVQDAYSLRCIPQVHGASWQVLNYVKEKLEIEMNAATDNPLIFDGGEKVISGGNFHGQPIAFAMDFLKVGMAELANISERRIERLVNPQLNDLPPFLSPEPGLQSGAMIMQYAAASLVSENKTLAHPASVDSIPSSANQEDHVSMGTIASRHAHQIIQNVRRVLSIEMICAMQAAEYRGIENMSTVTKSFYHQGRQQVPSITNDRIFSTDIENIAHWLKTNYSIKERLDVNAAL.

A cross-link (5-imidazolinone (Ala-Gly)) is located at residues 141–143 (ASG). Ser-142 carries the 2,3-didehydroalanine (Ser) modification.

This sequence belongs to the PAL/histidase family. In terms of processing, contains an active site 4-methylidene-imidazol-5-one (MIO), which is formed autocatalytically by cyclization and dehydration of residues Ala-Ser-Gly.

It localises to the cytoplasm. The enzyme catalyses L-histidine = trans-urocanate + NH4(+). It participates in amino-acid degradation; L-histidine degradation into L-glutamate; N-formimidoyl-L-glutamate from L-histidine: step 1/3. The chain is Histidine ammonia-lyase from Bacillus cereus (strain ATCC 10987 / NRS 248).